We begin with the raw amino-acid sequence, 77 residues long: Translation initiation factor IF-1, chloroplastic (77 aa).

The 71-residue stretch at 1–71 folds into the S1-like domain; it reads MKEQKWIHEG…TKGRIIYRIR (71 aa).

This sequence belongs to the IF-1 family. In terms of assembly, component of the 30S ribosomal translation pre-initiation complex which assembles on the 30S ribosome in the order IF-2 and IF-3, IF-1 and N-formylmethionyl-tRNA(fMet); mRNA recruitment can occur at any time during PIC assembly.

It localises to the plastid. The protein localises to the chloroplast. Functionally, one of the essential components for the initiation of protein synthesis. Stabilizes the binding of IF-2 and IF-3 on the 30S subunit to which N-formylmethionyl-tRNA(fMet) subsequently binds. Helps modulate mRNA selection, yielding the 30S pre-initiation complex (PIC). Upon addition of the 50S ribosomal subunit IF-1, IF-2 and IF-3 are released leaving the mature 70S translation initiation complex. This chain is Translation initiation factor IF-1, chloroplastic, found in Vitis vinifera (Grape).